A 392-amino-acid chain; its full sequence is S-adenosylmethionine synthase (392 aa).

H22 serves as a coordination point for ATP. D24 serves as a coordination point for Mg(2+). Residue E50 participates in K(+) binding. L-methionine contacts are provided by E63 and Q106. Residues 106-116 form a flexible loop region; sequence QSPDITQGVTL. ATP is bound by residues 170-172, 236-237, D245, 251-252, A268, and K272; these read DGK, KF, and RK. D245 lines the L-methionine pocket. K276 contributes to the L-methionine binding site.

Belongs to the AdoMet synthase family. Homotetramer; dimer of dimers. Requires Mg(2+) as cofactor. The cofactor is K(+).

The protein resides in the cytoplasm. It carries out the reaction L-methionine + ATP + H2O = S-adenosyl-L-methionine + phosphate + diphosphate. It participates in amino-acid biosynthesis; S-adenosyl-L-methionine biosynthesis; S-adenosyl-L-methionine from L-methionine: step 1/1. In terms of biological role, catalyzes the formation of S-adenosylmethionine (AdoMet) from methionine and ATP. The overall synthetic reaction is composed of two sequential steps, AdoMet formation and the subsequent tripolyphosphate hydrolysis which occurs prior to release of AdoMet from the enzyme. This chain is S-adenosylmethionine synthase, found in Sulfurimonas denitrificans (strain ATCC 33889 / DSM 1251) (Thiomicrospira denitrificans (strain ATCC 33889 / DSM 1251)).